We begin with the raw amino-acid sequence, 209 residues long: MFVRPESGEQGPETLAPASGAEIQRFPVPAVEPVPAPGADSPPGTALELEEAPEPSCRCPGTAQDQPSEELPDFMAPPVEPPASALELKVWLELEVAERGGQHSSSQQLPHCSQSWAQWKLWRQRPGFAIWAPLPHWRGTSLIQQSSSPAAEGPAATAAGAVCLPAGGAGEQEKEPVSRGSSRSSCSQRRPPPPGMEVCPQLGIWAICP.

Disordered regions lie at residues 1–80 (MFVR…PPVE) and 164–197 (LPAG…PGME). Positions 178 to 189 (SRGSSRSSCSQR) are enriched in low complexity.

This is an uncharacterized protein from Homo sapiens (Human).